We begin with the raw amino-acid sequence, 426 residues long: Enolase (426 aa).

Q163 lines the (2R)-2-phosphoglycerate pocket. E205 (proton donor) is an active-site residue. Residues D242, E283, and D310 each coordinate Mg(2+). K335, R364, S365, and K386 together coordinate (2R)-2-phosphoglycerate. The Proton acceptor role is filled by K335.

Belongs to the enolase family. The cofactor is Mg(2+).

It localises to the cytoplasm. It is found in the secreted. Its subcellular location is the cell surface. The catalysed reaction is (2R)-2-phosphoglycerate = phosphoenolpyruvate + H2O. The protein operates within carbohydrate degradation; glycolysis; pyruvate from D-glyceraldehyde 3-phosphate: step 4/5. Functionally, catalyzes the reversible conversion of 2-phosphoglycerate (2-PG) into phosphoenolpyruvate (PEP). It is essential for the degradation of carbohydrates via glycolysis. This Clavibacter michiganensis subsp. michiganensis (strain NCPPB 382) protein is Enolase.